Here is a 395-residue protein sequence, read N- to C-terminus: Hdr-like menaquinol oxidoreductase integral membrane subunit (395 aa).

A run of 10 helical transmembrane segments spans residues 15-35 (YFAL…AYVL), 57-77 (IPYF…AGVF), 88-108 (IAAY…ALDI), 126-146 (IFSW…IYLL), 158-178 (FMAG…GAIY), 196-216 (FIVC…YFTF), 231-251 (LALI…VEGL), 274-294 (VFWS…IIVL), 305-325 (ITFA…YLII), and 364-384 (IGLI…FALI).

This sequence belongs to the NrfD family. As to quaternary structure, consists of five subunits: an integral membrane subunit, a cytochrome b-like subunit, a cytochrome c subunit and two iron-sulfur subunits.

It localises to the cell membrane. Its function is as follows. Has menaquinol-oxidizing activity. HmeB subunit may function as a menaquinol-oxidizing site. HmeA, HmeB and HmeE subunits may together catalyze electron transfer from menaquinol to cytochrome c. This Archaeoglobus fulgidus (strain ATCC 49558 / DSM 4304 / JCM 9628 / NBRC 100126 / VC-16) protein is Hdr-like menaquinol oxidoreductase integral membrane subunit (hmeB).